Reading from the N-terminus, the 178-residue chain is Transcription antitermination protein NusB (178 aa).

This sequence belongs to the NusB family.

Its function is as follows. Involved in transcription antitermination. Required for transcription of ribosomal RNA (rRNA) genes. Binds specifically to the boxA antiterminator sequence of the ribosomal RNA (rrn) operons. The sequence is that of Transcription antitermination protein NusB from Alkalilimnicola ehrlichii (strain ATCC BAA-1101 / DSM 17681 / MLHE-1).